A 428-amino-acid polypeptide reads, in one-letter code: Glutamine synthetase, chloroplastic (428 aa).

A chloroplast-targeting transit peptide spans 1–49 (MAQILAASPTCQMRLTKPSSIASSKLWNSVVLKQKKQSSSKVRSFKVMA). Residues 75–155 (IIAEYIWIGG…VICDTYTPAG (81 aa)) enclose the GS beta-grasp domain. Positions 94–120 (RTLEKPVEDPSELPKWNYDGSSTGQAP) are disordered. The residue at position 104 (serine 104) is a Phosphoserine. The GS catalytic domain occupies 159–428 (PTNKRARAAE…LAAQKLSLKV (270 aa)).

The protein belongs to the glutamine synthetase family. As to quaternary structure, homooctamer.

It localises to the plastid. The protein resides in the chloroplast. It catalyses the reaction L-glutamate + NH4(+) + ATP = L-glutamine + ADP + phosphate + H(+). Functionally, the light-modulated chloroplast enzyme, encoded by a nuclear gene and expressed primarily in leaves, is responsible for the reassimilation of the ammonia generated by photorespiration. The sequence is that of Glutamine synthetase, chloroplastic (GLN2) from Brassica napus (Rape).